The following is a 670-amino-acid chain: DNA topoisomerase 6 subunit B (670 aa).

Residues M1–P30 are disordered. The segment covering V7–L25 has biased composition (basic and acidic residues). ATP is bound by residues N60, D160, T181–K182, G190–K197, and K516.

The protein belongs to the TOP6B family. In terms of assembly, homodimer. Heterotetramer of two TOP6A and two TOP6B subunits. Interacts with SPO11-2, but not with SPO11-1, RHL1 or BIN4. As to expression, highly expressed in leaves, stems, flowers and seedlings.

The protein resides in the nucleus. It carries out the reaction ATP-dependent breakage, passage and rejoining of double-stranded DNA.. Component of the DNA topoisomerase VI involved in chromatin organization and progression of endoreduplication cycles. Relaxes both positive and negative superturns and exhibits a strong decatenase activity. The B subunit binds ATP. Involved in cell-elongation processes. In Arabidopsis thaliana (Mouse-ear cress), this protein is DNA topoisomerase 6 subunit B.